Consider the following 565-residue polypeptide: Urocanate hydratase (565 aa).

NAD(+)-binding positions include 58-59 (GG), Q136, 182-184 (GMG), E202, R207, 245-246 (NA), 266-270 (QTSAH), 276-277 (YL), and Y325. Residue C413 is part of the active site. Residue G495 participates in NAD(+) binding.

The protein belongs to the urocanase family. It depends on NAD(+) as a cofactor.

It is found in the cytoplasm. It carries out the reaction 4-imidazolone-5-propanoate = trans-urocanate + H2O. The protein operates within amino-acid degradation; L-histidine degradation into L-glutamate; N-formimidoyl-L-glutamate from L-histidine: step 2/3. Its function is as follows. Catalyzes the conversion of urocanate to 4-imidazolone-5-propionate. This Vibrio cholerae serotype O1 (strain ATCC 39541 / Classical Ogawa 395 / O395) protein is Urocanate hydratase.